The following is a 37-amino-acid chain: Large ribosomal subunit protein bL36 (37 aa).

This sequence belongs to the bacterial ribosomal protein bL36 family.

In Nostoc punctiforme (strain ATCC 29133 / PCC 73102), this protein is Large ribosomal subunit protein bL36.